The chain runs to 154 residues: Metallothiol transferase FosB (154 aa).

In terms of domain architecture, VOC spans 8–123; the sequence is GINHLLFSVS…DGHKFELHTG (116 aa). The Mg(2+) site is built by His-11, His-70, and Glu-119. The Proton donor/acceptor role is filled by Glu-119.

Belongs to the fosfomycin resistance protein family. FosB subfamily. In terms of assembly, homodimer. It depends on Mg(2+) as a cofactor.

It is found in the cytoplasm. In terms of biological role, metallothiol transferase which confers resistance to fosfomycin by catalyzing the addition of a thiol cofactor to fosfomycin. L-cysteine is probably the physiological thiol donor. This Bacillus licheniformis (strain ATCC 14580 / DSM 13 / JCM 2505 / CCUG 7422 / NBRC 12200 / NCIMB 9375 / NCTC 10341 / NRRL NRS-1264 / Gibson 46) protein is Metallothiol transferase FosB.